A 135-amino-acid polypeptide reads, in one-letter code: Large ribosomal subunit protein eL27z (135 aa).

The protein belongs to the eukaryotic ribosomal protein eL27 family.

The sequence is that of Large ribosomal subunit protein eL27z (RPL27A) from Arabidopsis thaliana (Mouse-ear cress).